The chain runs to 251 residues: MILYEYPFNERIRTLLRLEDLFERFAFFLAQEDPREHHVALTTLFEIAEVTGRADLKSDLMKELERQRQTLAPFRGNPGIEQNALEAVLGEIEQTLANLAQMQGKTGQHLVDNEWLASIRSRAVIPGGTCKFDLPSYYAWQQWPAEQRRQDIAKWIMPLLPLRDAATIVLRLARESGQASKVMAMQGSYQQMLSGRSYQLMQVRVPRELHVIPEASANKYMLWVRFTMQDGDVRPRAVDIDVPFQLTLCNL.

The protein belongs to the ZapD family. As to quaternary structure, interacts with FtsZ.

It localises to the cytoplasm. In terms of biological role, cell division factor that enhances FtsZ-ring assembly. Directly interacts with FtsZ and promotes bundling of FtsZ protofilaments, with a reduction in FtsZ GTPase activity. The protein is Cell division protein ZapD of Burkholderia multivorans (strain ATCC 17616 / 249).